The primary structure comprises 421 residues: Phosphoribosylamine--glycine ligase (421 aa).

The ATP-grasp domain occupies 108–314 (KEIMVKYNVP…FAQNIDDIMM (207 aa)). 134 to 195 (IEEQGAPIVV…EEFLDGEEFS (62 aa)) is an ATP binding site. Positions 284 and 286 each coordinate Mg(2+).

This sequence belongs to the GARS family. Requires Mg(2+) as cofactor. It depends on Mn(2+) as a cofactor.

It carries out the reaction 5-phospho-beta-D-ribosylamine + glycine + ATP = N(1)-(5-phospho-beta-D-ribosyl)glycinamide + ADP + phosphate + H(+). The protein operates within purine metabolism; IMP biosynthesis via de novo pathway; N(1)-(5-phospho-D-ribosyl)glycinamide from 5-phospho-alpha-D-ribose 1-diphosphate: step 2/2. This chain is Phosphoribosylamine--glycine ligase, found in Streptococcus pyogenes serotype M1.